The chain runs to 778 residues: Hyperosmolality-gated Ca2+ permeable channel 1.4 (778 aa).

The next 10 membrane-spanning stretches (helical) occupy residues 7–27, 101–121, 158–178, 375–395, 427–447, 467–487, 512–532, 584–604, 626–646, and 651–671; these read IGLA…LFAI, IYLI…SILV, FWAH…VLMK, FVMH…IAFV, FLPG…LMIM, YYIF…SAFE, ATFF…GEIF, PVTP…YLVF, VHGR…GLMS, and VQST…HRFC. Residues 738-778 form a disordered region; that stretch reads VVQTKRQRSRRTTVASSNASRGSSQSTPFNQLDLGKGKPET. Over residues 753-763 the composition is skewed to low complexity; sequence SSNASRGSSQS.

Belongs to the CSC1 (TC 1.A.17) family.

Its subcellular location is the membrane. In terms of biological role, acts as an osmosensitive calcium-permeable cation channel. This chain is Hyperosmolality-gated Ca2+ permeable channel 1.4, found in Arabidopsis thaliana (Mouse-ear cress).